We begin with the raw amino-acid sequence, 522 residues long: Endochitinase 11 (522 aa).

Positions M1–A24 are cleaved as a signal peptide. N-linked (GlcNAc...) asparagine glycosylation is found at N148 and N275. A GH18 domain is found at K235–A522. E346 functions as the Proton donor in the catalytic mechanism. Residues N455 and N519 are each glycosylated (N-linked (GlcNAc...) asparagine).

The protein belongs to the glycosyl hydrolase 18 family. Chitinase class V subfamily.

Its subcellular location is the secreted. The enzyme catalyses Random endo-hydrolysis of N-acetyl-beta-D-glucosaminide (1-&gt;4)-beta-linkages in chitin and chitodextrins.. Functionally, secreted chitinase involved in the degradation of chitin, a component of the cell walls of fungi and exoskeletal elements of some animals (including worms and arthropods). Participates in the infection process and directly acts in the penetration process of the host cuticle. The sequence is that of Endochitinase 11 (chi11) from Metarhizium anisopliae (Entomophthora anisopliae).